A 391-amino-acid chain; its full sequence is Pectate lyase D (391 aa).

Residues 1–31 (MNNTRVSFRSTKSLLAAIIATSMMTWSVNRA) form the signal peptide. Positions 170 and 213 each coordinate Ca(2+). The active site involves Arg266.

It belongs to the polysaccharide lyase 1 family. PLBC subfamily. Ca(2+) is required as a cofactor.

It is found in the secreted. The catalysed reaction is Eliminative cleavage of (1-&gt;4)-alpha-D-galacturonan to give oligosaccharides with 4-deoxy-alpha-D-galact-4-enuronosyl groups at their non-reducing ends.. It participates in glycan metabolism; pectin degradation; 2-dehydro-3-deoxy-D-gluconate from pectin: step 2/5. Its function is as follows. Involved in maceration and soft-rotting of plant tissue. The protein is Pectate lyase D (pelD) of Dickeya chrysanthemi (Pectobacterium chrysanthemi).